We begin with the raw amino-acid sequence, 306 residues long: GTP cyclohydrolase FolE2 (306 aa).

It belongs to the GTP cyclohydrolase IV family.

It catalyses the reaction GTP + H2O = 7,8-dihydroneopterin 3'-triphosphate + formate + H(+). It participates in cofactor biosynthesis; 7,8-dihydroneopterin triphosphate biosynthesis; 7,8-dihydroneopterin triphosphate from GTP: step 1/1. Functionally, converts GTP to 7,8-dihydroneopterin triphosphate. This Xanthomonas oryzae pv. oryzae (strain MAFF 311018) protein is GTP cyclohydrolase FolE2.